A 210-amino-acid polypeptide reads, in one-letter code: MSAVPDIPGGPAQRLAQACDALRLPADAGQQQKLLRYIEQMQRWNRTYNLTAIRDPGQMLVQHLFDSLSVVAPLERGLPGVVLAIMRAHWDVTCVDAVEKKTAFVRQMAGALGLPNLQAAHTRIEQLEPAQCDVVISRAFASLQDFAKLAGRHVREGGTLVAMKGKVPDDEIQALQQHGHWTVERIEPLVVPALDAQRCLIWMRRSQGNI.

S-adenosyl-L-methionine is bound by residues L78, I124 to E125, and R138.

Belongs to the methyltransferase superfamily. RNA methyltransferase RsmG family.

It is found in the cytoplasm. It catalyses the reaction guanosine(527) in 16S rRNA + S-adenosyl-L-methionine = N(7)-methylguanosine(527) in 16S rRNA + S-adenosyl-L-homocysteine. Its function is as follows. Specifically methylates the N7 position of guanine in position 527 of 16S rRNA. The polypeptide is Ribosomal RNA small subunit methyltransferase G (Bordetella bronchiseptica (strain ATCC BAA-588 / NCTC 13252 / RB50) (Alcaligenes bronchisepticus)).